A 210-amino-acid chain; its full sequence is Thymidylate kinase (210 aa).

ATP is bound at residue G10 to T17.

It belongs to the thymidylate kinase family.

The enzyme catalyses dTMP + ATP = dTDP + ADP. Phosphorylation of dTMP to form dTDP in both de novo and salvage pathways of dTTP synthesis. The polypeptide is Thymidylate kinase (Geobacillus sp. (strain WCH70)).